We begin with the raw amino-acid sequence, 527 residues long: Glutamate--cysteine ligase (527 aa).

This sequence belongs to the glutamate--cysteine ligase type 1 family. Type 1 subfamily.

The enzyme catalyses L-cysteine + L-glutamate + ATP = gamma-L-glutamyl-L-cysteine + ADP + phosphate + H(+). The protein operates within sulfur metabolism; glutathione biosynthesis; glutathione from L-cysteine and L-glutamate: step 1/2. The polypeptide is Glutamate--cysteine ligase (Pseudomonas aeruginosa (strain ATCC 15692 / DSM 22644 / CIP 104116 / JCM 14847 / LMG 12228 / 1C / PRS 101 / PAO1)).